The primary structure comprises 129 residues: MAWISLILSLLALSSGAISQAVVTQESALTTSPGETVTLTCRSSTGAVTTSNYANWVQEKPDHLFTGLIGGTNNRAPGVPARFSGSLIGDKAALTITGTQTEDEAMYFCALWYSNHWVFGGGTKLTVLG.

Positions 1–19 are cleaved as a signal peptide; it reads MAWISLILSLLALSSGAIS. Position 20 is a pyrrolidone carboxylic acid (Gln20). An Ig-like domain is found at 20–125; that stretch reads QAVVTQESAL…HWVFGGGTKL (106 aa).

The polypeptide is Ig lambda-1 chain V region S43 (Mus musculus (Mouse)).